The sequence spans 338 residues: DNA-directed RNA polymerase subunit alpha (338 aa).

The alpha N-terminal domain (alpha-NTD) stretch occupies residues 1-234; the sequence is MIHKNWAELI…DQLSIFVNFD (234 aa). The tract at residues 250–338 is alpha C-terminal domain (alpha-CTD); it reads FNPLLLKKVD…DLAKKFEDAF (89 aa).

It belongs to the RNA polymerase alpha chain family. Homodimer. The RNAP catalytic core consists of 2 alpha, 1 beta, 1 beta' and 1 omega subunit. When a sigma factor is associated with the core the holoenzyme is formed, which can initiate transcription.

It carries out the reaction RNA(n) + a ribonucleoside 5'-triphosphate = RNA(n+1) + diphosphate. In terms of biological role, DNA-dependent RNA polymerase catalyzes the transcription of DNA into RNA using the four ribonucleoside triphosphates as substrates. The polypeptide is DNA-directed RNA polymerase subunit alpha (Ruegeria pomeroyi (strain ATCC 700808 / DSM 15171 / DSS-3) (Silicibacter pomeroyi)).